The chain runs to 300 residues: Iodotyrosine deiodinase (300 aa).

Residues 15 to 31 traverse the membrane as a helical segment; it reads VGLISVSIAAGVALGQL. FMN-binding positions include 110–114, Ser138, and 138–139; these read RRSVR and SG. 3,5-diiodo-L-tyrosine-binding residues include Ala140, Glu167, Tyr171, and Lys192. 3-iodo-L-tyrosine is bound by residues Ala140, Glu167, Tyr171, and Lys192. Residues 247-249 and Arg289 each bind FMN; that span reads TTT.

Belongs to the nitroreductase family. The cofactor is FMN. Post-translationally, may be cleaved at Gln-55. The cleaved form retains catalytic activity.

It is found in the membrane. It catalyses the reaction 2 iodide + L-tyrosine + 2 NADP(+) = 3,5-diiodo-L-tyrosine + 2 NADPH + H(+). The catalysed reaction is iodide + L-tyrosine + NADP(+) = 3-iodo-L-tyrosine + NADPH. It carries out the reaction 3-iodo-L-tyrosine + iodide + NADP(+) = 3,5-diiodo-L-tyrosine + NADPH + H(+). The enzyme catalyses L-tyrosine + chloride + NADP(+) = 3-chloro-L-tyrosine + NADPH. It catalyses the reaction bromide + L-tyrosine + NADP(+) = 3-bromo-L-tyrosine + NADPH. Its function is as follows. Catalyzes the dehalogenation of halotyrosines such as 3,5-diiodo-L-tyrosine. Likely to also catalyze the dehalogenation of other halotyrosines such as 3-bromo-L-tyrosine, 3-chloro-L-tyrosine and 3-iodo-L-tyrosine. In Daphnia pulex (Water flea), this protein is Iodotyrosine deiodinase.